The sequence spans 574 residues: Septation ring formation regulator EzrA (574 aa).

At 1–7 (MPTGTII) the chain is on the extracellular side. The chain crosses the membrane as a helical span at residues 8–26 (LIVSIVIILIIAYVACLIV). Topologically, residues 27-574 (RKRNDNLLVA…YEKTREAIRY (548 aa)) are cytoplasmic. Residues 105–189 (SAKNAIDSID…IEVEFSEFVM (85 aa)) are a coiled coil.

The protein belongs to the EzrA family.

Its subcellular location is the cell membrane. Functionally, negative regulator of FtsZ ring formation; modulates the frequency and position of FtsZ ring formation. Inhibits FtsZ ring formation at polar sites. Interacts either with FtsZ or with one of its binding partners to promote depolymerization. The chain is Septation ring formation regulator EzrA from Streptococcus suis (strain 98HAH33).